The following is a 903-amino-acid chain: DNA transposase THAP9 (903 aa).

The segment at 1 to 89 (MTRSCSAVGC…LKKGAVPSVS (89 aa)) adopts a THAP-type zinc-finger fold. Residues 123–126 (DHNY) carry the HCFC1-binding motif (HBM) motif.

Its function is as follows. Active transposase that specifically recognizes the bipartite 5'-TXXGGGX(A/T)-3' consensus motif and mediates transposition. The chain is DNA transposase THAP9 (THAP9) from Homo sapiens (Human).